The following is a 113-amino-acid chain: Nucleoid-associated protein THA_1374 (113 aa).

The protein belongs to the YbaB/EbfC family. As to quaternary structure, homodimer.

Its subcellular location is the cytoplasm. It is found in the nucleoid. Binds to DNA and alters its conformation. May be involved in regulation of gene expression, nucleoid organization and DNA protection. The protein is Nucleoid-associated protein THA_1374 of Thermosipho africanus (strain TCF52B).